The following is a 187-amino-acid chain: MTEYKLVVVGAVGVGKSALTIQLIQNHFVDEYDPTIEDSYRKQVVIDGETCLLDILDTAGQEEYSAMRDQYMRTGEGFLCVFAINNIKSFEDIHHYREQIKRVKDSEDVPMVLVGNKCALPSRTVDTKQAQDLARSYGIPFIETSAKTRQGVDDAFYTLVREIRKHKEKMSKDGKKKKKSKTKCSIL.

Residues 10–18 (GAVGVGKSA), 29–35 (VDEYDPT), 59–60 (AG), and 116–119 (NKCA) contribute to the GTP site. The short motif at 32–40 (YDPTIEDSY) is the Effector region element. The disordered stretch occupies residues 168-187 (EKMSKDGKKKKKSKTKCSIL). Residue C184 is modified to Cysteine methyl ester. C184 carries S-farnesyl cysteine lipidation. A propeptide spans 185–187 (SIL) (removed in mature form).

Belongs to the small GTPase superfamily. Ras family.

It is found in the cell membrane. It localises to the cytoplasm. It catalyses the reaction GTP + H2O = GDP + phosphate + H(+). Its activity is regulated as follows. Alternates between an inactive form bound to GDP and an active form bound to GTP. Activated by a guanine nucleotide-exchange factor (GEF) and inactivated by a GTPase-activating protein (GAP). Functionally, ras proteins bind GDP/GTP and possess intrinsic GTPase activity. Plays an important role in the regulation of cell proliferation. The polypeptide is GTPase KRas (kras) (Xenopus laevis (African clawed frog)).